The sequence spans 953 residues: ALS2 C-terminal-like protein (953 aa).

MORN repeat units lie at residues 358-380 (YEGEWCRGRPHGKGTLKWPDGRN), 381-403 (HVGNFCQGLEHGFGIRLLPQASE), 409-431 (YKCHWREGSMCGYGICEYSTDEV), 432-452 (YKGYFQEGLRHGFGVLESGPQ), 459-479 (YTGHWERGQRSGYGIEEDGDR), 483-505 (YIGMWQAGQRHGPGVMVTQAGVC), 506-528 (YQGTFQADKTVGPGILLSEDDSL), and 529-552 (YEGTFTRDLTLMGKGKVTFPNGFT). In terms of domain architecture, VPS9 spans 796–942 (LFPDTQLLEF…IQKEDMRLHR (147 aa)).

In terms of assembly, homodimer. Forms a heteromeric complex with ALS2. Interacts with ALS2 and RAB5A. In terms of tissue distribution, expressed in heart and kidney.

It localises to the cytoplasm. Its function is as follows. Acts as a guanine nucleotide exchange factor (GEF) for Rab5 GTPase. Regulates the ALS2-mediated endosome dynamics. This chain is ALS2 C-terminal-like protein (ALS2CL), found in Homo sapiens (Human).